The following is a 488-amino-acid chain: Bifunctional protein GlmU (488 aa).

The pyrophosphorylase stretch occupies residues methionine 1–arginine 237. UDP-N-acetyl-alpha-D-glucosamine contacts are provided by residues leucine 13 to glycine 16, lysine 27, glutamine 82, glycine 87 to threonine 88, serine 110 to aspartate 112, glycine 149, glutamate 164, asparagine 179, and asparagine 235. A Mg(2+)-binding site is contributed by aspartate 112. Asparagine 235 provides a ligand contact to Mg(2+). Residues isoleucine 238–alanine 258 form a linker region. Residues glycine 259–serine 488 form an N-acetyltransferase region. Positions 341 and 359 each coordinate UDP-N-acetyl-alpha-D-glucosamine. Residue histidine 371 is the Proton acceptor of the active site. The UDP-N-acetyl-alpha-D-glucosamine site is built by tyrosine 374 and asparagine 385. Acetyl-CoA contacts are provided by residues alanine 388, asparagine 394–tyrosine 395, serine 413, alanine 431, and arginine 448. The segment at alanine 459–serine 488 is disordered. Residues arginine 478–serine 488 are compositionally biased toward basic residues.

In the N-terminal section; belongs to the N-acetylglucosamine-1-phosphate uridyltransferase family. It in the C-terminal section; belongs to the transferase hexapeptide repeat family. Homotrimer. Mg(2+) serves as cofactor.

It is found in the cytoplasm. The catalysed reaction is alpha-D-glucosamine 1-phosphate + acetyl-CoA = N-acetyl-alpha-D-glucosamine 1-phosphate + CoA + H(+). It carries out the reaction N-acetyl-alpha-D-glucosamine 1-phosphate + UTP + H(+) = UDP-N-acetyl-alpha-D-glucosamine + diphosphate. It participates in nucleotide-sugar biosynthesis; UDP-N-acetyl-alpha-D-glucosamine biosynthesis; N-acetyl-alpha-D-glucosamine 1-phosphate from alpha-D-glucosamine 6-phosphate (route II): step 2/2. It functions in the pathway nucleotide-sugar biosynthesis; UDP-N-acetyl-alpha-D-glucosamine biosynthesis; UDP-N-acetyl-alpha-D-glucosamine from N-acetyl-alpha-D-glucosamine 1-phosphate: step 1/1. The protein operates within bacterial outer membrane biogenesis; LPS lipid A biosynthesis. In terms of biological role, catalyzes the last two sequential reactions in the de novo biosynthetic pathway for UDP-N-acetylglucosamine (UDP-GlcNAc). The C-terminal domain catalyzes the transfer of acetyl group from acetyl coenzyme A to glucosamine-1-phosphate (GlcN-1-P) to produce N-acetylglucosamine-1-phosphate (GlcNAc-1-P), which is converted into UDP-GlcNAc by the transfer of uridine 5-monophosphate (from uridine 5-triphosphate), a reaction catalyzed by the N-terminal domain. In Anaeromyxobacter dehalogenans (strain 2CP-C), this protein is Bifunctional protein GlmU.